Consider the following 274-residue polypeptide: 4-deoxy-L-threo-5-hexosulose-uronate ketol-isomerase (274 aa).

His-192, His-194, Glu-199, and His-241 together coordinate Zn(2+).

The protein belongs to the KduI family. The cofactor is Zn(2+).

It carries out the reaction 5-dehydro-4-deoxy-D-glucuronate = 3-deoxy-D-glycero-2,5-hexodiulosonate. It functions in the pathway glycan metabolism; pectin degradation; 2-dehydro-3-deoxy-D-gluconate from pectin: step 4/5. Catalyzes the isomerization of 5-dehydro-4-deoxy-D-glucuronate to 3-deoxy-D-glycero-2,5-hexodiulosonate. This is 4-deoxy-L-threo-5-hexosulose-uronate ketol-isomerase from Agrobacterium fabrum (strain C58 / ATCC 33970) (Agrobacterium tumefaciens (strain C58)).